The chain runs to 199 residues: VAMP-like protein YKT61 (199 aa).

Residues 7-133 enclose the Longin domain; it reads LVLKCAPEAS…LTEALNKFQD (127 aa). The v-SNARE coiled-coil homology domain maps to 139-199; that stretch reads KLLKIQRELD…KKTNSCCTIL (61 aa). Residue Cys195 is the site of S-palmitoyl cysteine attachment. Cys196 is subject to Cysteine methyl ester. Cys196 carries the S-geranylgeranyl cysteine lipid modification. Positions 197 to 199 are cleaved as a propeptide — removed in mature form; the sequence is TIL.

This sequence belongs to the synaptobrevin family. Interacts with SYP41. Core constituent of the SNARE complex required for membrane fusion at the trans-Golgi network. As to expression, expressed ubiquitously in roots, stems, flowers and leaves.

It is found in the cell membrane. May be involved in the secretory pathway. Essential for membrane fusion mediated by either SYP41 or SYP61; triggers the fusion of phospholipid vesicles containing SYP41 or SYP61 and VTI12. In Arabidopsis thaliana (Mouse-ear cress), this protein is VAMP-like protein YKT61.